Here is a 466-residue protein sequence, read N- to C-terminus: Argininosuccinate lyase (466 aa).

Belongs to the lyase 1 family. Argininosuccinate lyase subfamily.

It localises to the cytoplasm. The enzyme catalyses 2-(N(omega)-L-arginino)succinate = fumarate + L-arginine. Its pathway is amino-acid biosynthesis; L-arginine biosynthesis; L-arginine from L-ornithine and carbamoyl phosphate: step 3/3. The sequence is that of Argininosuccinate lyase from Brucella abortus (strain S19).